Consider the following 307-residue polypeptide: Small ribosomal subunit biogenesis GTPase RsgA (307 aa).

The 158-residue stretch at 80-237 (KADLRQTIVS…IVDTPGIKEF (158 aa)) folds into the CP-type G domain. GTP is bound by residues 129–132 (NKID) and 180–188 (GQSGVGKSS). Zn(2+) is bound by residues Cys-261, Cys-266, His-268, and Cys-274.

It belongs to the TRAFAC class YlqF/YawG GTPase family. RsgA subfamily. Monomer. Associates with 30S ribosomal subunit, binds 16S rRNA. Zn(2+) serves as cofactor.

The protein resides in the cytoplasm. Its function is as follows. One of several proteins that assist in the late maturation steps of the functional core of the 30S ribosomal subunit. Helps release RbfA from mature subunits. May play a role in the assembly of ribosomal proteins into the subunit. Circularly permuted GTPase that catalyzes slow GTP hydrolysis, GTPase activity is stimulated by the 30S ribosomal subunit. The sequence is that of Small ribosomal subunit biogenesis GTPase RsgA from Borreliella burgdorferi (strain ATCC 35210 / DSM 4680 / CIP 102532 / B31) (Borrelia burgdorferi).